The primary structure comprises 345 residues: High mobility group protein 20A (345 aa).

Disordered stretches follow at residues 1–130 (MEST…PFPE) and 166–206 (QKYQ…EKES). Polar residues-rich tracts occupy residues 22 to 38 (NNQP…SSQA) and 57 to 67 (LHQSGEQQLGN). Residues 80–94 (ARRGGWNKGRKRKRS) are compositionally biased toward basic residues. The HMG box DNA-binding region spans 101–169 (PKAPLTGYVR…RYTKELQKYQ (69 aa)). The segment covering 112 to 125 (MNERREQLRTERPD) has biased composition (basic and acidic residues). Over residues 167-178 (KYQNTDAYQTYS) the composition is skewed to polar residues. Over residues 179–189 (RKAKSRQKGRQ) the composition is skewed to basic residues. Residues 227–285 (SKAREAELRQLRKSNMEFEERNAALQKHVESMRSAVQRLEAELSQEHERNSLLQQHLQS) are a coiled coil.

The protein localises to the nucleus. In terms of biological role, plays a role in neuronal differentiation. The sequence is that of High mobility group protein 20A (hmg20a) from Xenopus laevis (African clawed frog).